Here is a 153-residue protein sequence, read N- to C-terminus: Large ribosomal subunit protein uL13 (153 aa).

Belongs to the universal ribosomal protein uL13 family. Part of the 50S ribosomal subunit.

This protein is one of the early assembly proteins of the 50S ribosomal subunit, although it is not seen to bind rRNA by itself. It is important during the early stages of 50S assembly. The sequence is that of Large ribosomal subunit protein uL13 from Methylobacterium nodulans (strain LMG 21967 / CNCM I-2342 / ORS 2060).